A 401-amino-acid polypeptide reads, in one-letter code: MKTLWKHCHIASMAHGKYSIIENAAIVTSGALIEWIGPETELAEPEHDNCIDLGGAWVTPGLIDCHTHTVFGGNRSGEFEQRLQGVSYAEIAAAGGGIASTVRATRAASEDELYASAERRLRHLLKDGVTTVEMKSGYGLDLENERKILRVIRRLGNTQPVTVRATCLAAHALPPEYADRAADYINHICNDMLPALAAEGLVDAVDAFCEYLAFSPAQVEQVFISAGQLALPVKLHAEQLSSLGGSSLAAHYKALSADHLEFMTEDDAVAMAAAGTVAVLLPGAFYFLRETQLPPMEALRKHGVPIAISTDLNPGTSPGLSLRLMLNMACTLFRMTPEEALAGVTFNAAKALGMSATHGSLEVGKVADFVAWDIERPADLAYWLGGDLDKRIVRHGVESSI.

The Fe(3+) site is built by His-66 and His-68. His-66 and His-68 together coordinate Zn(2+). 3 residues coordinate 4-imidazolone-5-propanoate: Arg-75, Tyr-138, and His-171. An N-formimidoyl-L-glutamate-binding site is contributed by Tyr-138. His-236 contacts Fe(3+). His-236 serves as a coordination point for Zn(2+). Gln-239 is a 4-imidazolone-5-propanoate binding site. Residue Asp-311 coordinates Fe(3+). Asp-311 is a Zn(2+) binding site. N-formimidoyl-L-glutamate contacts are provided by Asn-313 and Gly-315. Thr-316 is a 4-imidazolone-5-propanoate binding site.

The protein belongs to the metallo-dependent hydrolases superfamily. HutI family. Zn(2+) serves as cofactor. Requires Fe(3+) as cofactor.

The protein localises to the cytoplasm. The enzyme catalyses 4-imidazolone-5-propanoate + H2O = N-formimidoyl-L-glutamate. It participates in amino-acid degradation; L-histidine degradation into L-glutamate; N-formimidoyl-L-glutamate from L-histidine: step 3/3. Its function is as follows. Catalyzes the hydrolytic cleavage of the carbon-nitrogen bond in imidazolone-5-propanoate to yield N-formimidoyl-L-glutamate. It is the third step in the universal histidine degradation pathway. The sequence is that of Imidazolonepropionase from Pseudomonas savastanoi pv. phaseolicola (strain 1448A / Race 6) (Pseudomonas syringae pv. phaseolicola (strain 1448A / Race 6)).